The primary structure comprises 841 residues: mRNA export factor ICP27 homolog (841 aa).

2 disordered regions span residues 12 to 82 (PFAG…QYDK) and 115 to 163 (RAQG…TSPD). Residues 32–49 (YSQQQSQHYYYGHNQSSY) are compositionally biased toward low complexity. Residues 66 to 79 (MPPPLSSPSSPPPQ) show a composition bias toward pro residues. The segment covering 132–147 (SSLVSSNNSNNNTTLS) has biased composition (low complexity). 4 residues coordinate Zn(2+): C298, H411, C413, and C418. The segment at 298–418 (CLLDSPGGGG…PGHRCQNEIC (121 aa)) adopts a CHC2-type zinc-finger fold. Disordered stretches follow at residues 444-749 (HPNG…DDLH) and 774-811 (SVTPLAAPPSIRILDHEPGDAEEEEESDTDFYDETDQP). Positions 495–507 (VDSRGGGGDRRGD) are enriched in basic and acidic residues. The span at 514–526 (NHHRHHTRRARTR) shows a compositional bias: basic residues. Residues 553 to 563 (RRGEAQRESNG) show a composition bias toward basic and acidic residues. Low complexity-rich tracts occupy residues 568–579 (KSPSTVSSTTVH) and 591–603 (SRKSQQSQQQPET). A compositionally biased stretch (pro residues) spans 614 to 623 (MPPPPSPCSP). The segment covering 641 to 657 (RPHDPPSGEPADAEKEL) has biased composition (basic and acidic residues). Positions 688–699 (DSSSSSSDSSSS) are enriched in low complexity. A compositionally biased stretch (basic and acidic residues) spans 708–731 (EDCRELDLQSKRLEEALEERCERD). 2 stretches are compositionally biased toward acidic residues: residues 732-749 (FEADDEEFAEPIEEDDLH) and 793-809 (DAEEEEESDTDFYDETD).

This sequence belongs to the HHV-1 ICP27 protein family.

The protein resides in the virion tegument. It localises to the virion. The protein localises to the host nucleus. Its subcellular location is the host cytoplasm. Its function is as follows. Immediate early (EI) protein that plays many roles during productive infection including regulation of viral gene expression and nuclear export of intronless viral RNAs. This Mus musculus (Mouse) protein is mRNA export factor ICP27 homolog.